A 300-amino-acid polypeptide reads, in one-letter code: Acetylglutamate kinase (300 aa).

Residues 73–74 (GG), Arg95, and Asn197 contribute to the substrate site.

Belongs to the acetylglutamate kinase family. ArgB subfamily.

It is found in the cytoplasm. The catalysed reaction is N-acetyl-L-glutamate + ATP = N-acetyl-L-glutamyl 5-phosphate + ADP. Its pathway is amino-acid biosynthesis; L-arginine biosynthesis; N(2)-acetyl-L-ornithine from L-glutamate: step 2/4. Functionally, catalyzes the ATP-dependent phosphorylation of N-acetyl-L-glutamate. The sequence is that of Acetylglutamate kinase from Polynucleobacter asymbioticus (strain DSM 18221 / CIP 109841 / QLW-P1DMWA-1) (Polynucleobacter necessarius subsp. asymbioticus).